Consider the following 496-residue polypeptide: tRNA modification GTPase mss1, mitochondrial (496 aa).

Residues 1–19 (MRILNRVFLNTFQACFRRF) constitute a mitochondrion transit peptide. The TrmE-type G domain maps to 239–416 (GINVAILGPS…FLQALSSTFE (178 aa)). GTP-binding positions include 246–253 (GPSNAGKS), 293–297 (DTAGL), and 363–366 (NKVD).

The protein belongs to the TRAFAC class TrmE-Era-EngA-EngB-Septin-like GTPase superfamily. TrmE GTPase family.

It localises to the mitochondrion. Its function is as follows. GTPase involved in the 5-carboxymethylaminomethyl modification (mnm(5)s(2)U34) of the wobble uridine base in mitochondrial tRNAs. The sequence is that of tRNA modification GTPase mss1, mitochondrial (mss1) from Schizosaccharomyces pombe (strain 972 / ATCC 24843) (Fission yeast).